Here is a 168-residue protein sequence, read N- to C-terminus: Endoribonuclease YbeY (168 aa).

Zn(2+) contacts are provided by His-125, His-129, and His-135.

Belongs to the endoribonuclease YbeY family. Zn(2+) is required as a cofactor.

It localises to the cytoplasm. In terms of biological role, single strand-specific metallo-endoribonuclease involved in late-stage 70S ribosome quality control and in maturation of the 3' terminus of the 16S rRNA. This chain is Endoribonuclease YbeY, found in Rhodopseudomonas palustris (strain BisB18).